The primary structure comprises 406 residues: Probable mannan endo-1,4-beta-mannosidase C (406 aa).

The first 20 residues, 1 to 20, serve as a signal peptide directing secretion; that stretch reads MLINFEKVLSLALLAGSVSG. N58 carries N-linked (GlcNAc...) asparagine glycosylation. W80 is a binding site for substrate. N-linked (GlcNAc...) asparagine glycosylation is found at N86 and N114. N201 serves as a coordination point for substrate. E202 acts as the Proton donor in catalysis. Y287 contacts substrate. The active-site Nucleophile is the E320. An N-linked (GlcNAc...) asparagine glycan is attached at N338. W362 contributes to the substrate binding site.

Belongs to the glycosyl hydrolase 5 (cellulase A) family.

It localises to the secreted. The catalysed reaction is Random hydrolysis of (1-&gt;4)-beta-D-mannosidic linkages in mannans, galactomannans and glucomannans.. Functionally, endo-1,4-mannanase, a crucial enzyme for depolymerization of seed galactomannans and wood galactoglucomannans. In Aspergillus terreus (strain NIH 2624 / FGSC A1156), this protein is Probable mannan endo-1,4-beta-mannosidase C (manC).